The primary structure comprises 614 residues: DNA mismatch repair protein MutL (614 aa).

This sequence belongs to the DNA mismatch repair MutL/HexB family.

In terms of biological role, this protein is involved in the repair of mismatches in DNA. It is required for dam-dependent methyl-directed DNA mismatch repair. May act as a 'molecular matchmaker', a protein that promotes the formation of a stable complex between two or more DNA-binding proteins in an ATP-dependent manner without itself being part of a final effector complex. This Leptospira biflexa serovar Patoc (strain Patoc 1 / ATCC 23582 / Paris) protein is DNA mismatch repair protein MutL.